We begin with the raw amino-acid sequence, 344 residues long: N-acetyl-gamma-glutamyl-phosphate reductase (344 aa).

Cys-149 is an active-site residue.

Belongs to the NAGSA dehydrogenase family. Type 1 subfamily.

It is found in the cytoplasm. The catalysed reaction is N-acetyl-L-glutamate 5-semialdehyde + phosphate + NADP(+) = N-acetyl-L-glutamyl 5-phosphate + NADPH + H(+). It functions in the pathway amino-acid biosynthesis; L-arginine biosynthesis; N(2)-acetyl-L-ornithine from L-glutamate: step 3/4. Its function is as follows. Catalyzes the NADPH-dependent reduction of N-acetyl-5-glutamyl phosphate to yield N-acetyl-L-glutamate 5-semialdehyde. In Thermoanaerobacter pseudethanolicus (strain ATCC 33223 / 39E) (Clostridium thermohydrosulfuricum), this protein is N-acetyl-gamma-glutamyl-phosphate reductase.